We begin with the raw amino-acid sequence, 337 residues long: Glyceraldehyde-3-phosphate dehydrogenase (337 aa).

NAD(+) is bound by residues 12 to 13 (RI), Asp34, and Lys79. Residues 150 to 152 (SCT), Thr181, 210 to 211 (TG), and Arg233 each bind D-glyceraldehyde 3-phosphate. Residue Cys151 is the Nucleophile of the active site. Residue Asn315 participates in NAD(+) binding.

It belongs to the glyceraldehyde-3-phosphate dehydrogenase family. Homotetramer.

It is found in the cytoplasm. It catalyses the reaction D-glyceraldehyde 3-phosphate + phosphate + NAD(+) = (2R)-3-phospho-glyceroyl phosphate + NADH + H(+). It participates in carbohydrate degradation; glycolysis; pyruvate from D-glyceraldehyde 3-phosphate: step 1/5. The protein is Glyceraldehyde-3-phosphate dehydrogenase (GPD) of Schizophyllum commune (Split gill fungus).